Here is a 109-residue protein sequence, read N- to C-terminus: Ribonuclease P protein component 4 (109 aa).

Zn(2+)-binding residues include Cys65, Cys68, Cys94, and Cys97.

It belongs to the eukaryotic/archaeal RNase P protein component 4 family. Consists of a catalytic RNA component and at least 4-5 protein subunits. Zn(2+) serves as cofactor.

It localises to the cytoplasm. It catalyses the reaction Endonucleolytic cleavage of RNA, removing 5'-extranucleotides from tRNA precursor.. In terms of biological role, part of ribonuclease P, a protein complex that generates mature tRNA molecules by cleaving their 5'-ends. The protein is Ribonuclease P protein component 4 of Methanococcus vannielii (strain ATCC 35089 / DSM 1224 / JCM 13029 / OCM 148 / SB).